The sequence spans 236 residues: 2-C-methyl-D-erythritol 4-phosphate cytidylyltransferase (236 aa).

Belongs to the IspD/TarI cytidylyltransferase family. IspD subfamily. As to quaternary structure, homodimer.

The enzyme catalyses 2-C-methyl-D-erythritol 4-phosphate + CTP + H(+) = 4-CDP-2-C-methyl-D-erythritol + diphosphate. It functions in the pathway isoprenoid biosynthesis; isopentenyl diphosphate biosynthesis via DXP pathway; isopentenyl diphosphate from 1-deoxy-D-xylulose 5-phosphate: step 2/6. In terms of biological role, catalyzes the formation of 4-diphosphocytidyl-2-C-methyl-D-erythritol from CTP and 2-C-methyl-D-erythritol 4-phosphate (MEP). The sequence is that of 2-C-methyl-D-erythritol 4-phosphate cytidylyltransferase from Salmonella heidelberg (strain SL476).